The sequence spans 1295 residues: Protein glp-1 (1295 aa).

The first 15 residues, 1-15, serve as a signal peptide directing secretion; it reads MRVLLILLAFFAPIA. Residues 16-764 are Extracellular-facing; that stretch reads SQLMGGECGR…NEIDEGWSRS (749 aa). EGF-like domains follow at residues 19–58, 117–152, 154–190, and 190–230; these read MGGECGREGACSVNGKCYNGKLIETYWCRCKKGFGGAFCE, GVNPCDSDPCNNGLCYPFYGGFQCICNNGYGGSYCE, GIDHCAQNECAEGSTCVNSVYNYYCDCPIGKSGRYCE, and ERTE…EFCN. Intrachain disulfides connect Cys-23-Cys-35, Cys-29-Cys-46, Cys-48-Cys-57, Cys-121-Cys-131, Cys-126-Cys-140, Cys-142-Cys-151, Cys-158-Cys-169, Cys-163-Cys-178, Cys-180-Cys-189, Cys-201-Cys-206, Cys-220-Cys-229, Cys-236-Cys-248, Cys-242-Cys-257, Cys-259-Cys-268, Cys-275-Cys-286, Cys-280-Cys-296, Cys-298-Cys-307, Cys-329-Cys-342, Cys-336-Cys-347, Cys-349-Cys-358, Cys-373-Cys-384, Cys-378-Cys-394, Cys-396-Cys-405, Cys-411-Cys-422, Cys-416-Cys-431, Cys-433-Cys-442, Cys-450-Cys-461, Cys-455-Cys-467, Cys-469-Cys-478, Cys-496-Cys-519, Cys-501-Cys-514, Cys-510-Cys-526, Cys-536-Cys-560, Cys-542-Cys-555, Cys-551-Cys-567, Cys-582-Cys-595, and Cys-591-Cys-607. An EGF-like 5; calcium-binding domain is found at 232–269; that stretch reads DKNECLIEETCVNNSTCFNLHGDFTCTCKPGYAGKYCE. N-linked (GlcNAc...) asparagine glycans are attached at residues Asn-244 and Asn-245. 5 consecutive EGF-like domains span residues 271 to 308, 316 to 359, 369 to 406, 407 to 443, and 446 to 479; these read AIDMCKDYVCQNDGYCAHDSNQMPICYCEQGFTGQRCE, GGIH…DRCE, DIQSCKYNPCVNNATCIDLKNSGYSCHCPLGFYGLNCE, QHLLCTPTTCANGGTCEGVNGVIRCNCPNGFSGDYCE, and DRQLCSRHPCKNGGVCKNTGYCECQYGYTGPTCE. The N-linked (GlcNAc...) asparagine glycan is linked to Asn-333. Asn-381 is a glycosylation site (N-linked (GlcNAc...) asparagine). LNR repeat units lie at residues 496 to 532, 536 to 577, and 581 to 612; these read CEQRKCMDLASNGICNPECNLEECNFDGGDCSGGQRP, CQYP…CPAH, and HCIERRGDGVCNLECSFIGCGFDGGDCNNGTE. N-linked (GlcNAc...) asparagine glycosylation is found at Asn-609 and Asn-675. Residues 765–786 traverse the membrane as a helical segment; it reads QVILFACIAFLAFGTVVAGVIA. The Cytoplasmic portion of the chain corresponds to 787-1295; it reads KNGPERSRKR…AEQMNGSFYC (509 aa). ANK repeat units follow at residues 961–990, 994–1023, 1030–1062, 1074–1103, and 1107–1136; these read DENTALMLAVRAHRVRLSVVLLREGANPTI, SERSALHEAVVNKDLRILRHLLTDKRLLKE, NGMTALMLVARELGKHQVEMAELLLSKGAKLDY, KGRTALHYAAMHDNEEMVIMLVRRSSNKDK, and DGRTPIMLAAKEGCEKTVQYLALNDASLGI. The interval 1177–1244 is disordered; sequence IVKSGHGAKS…TTSTPNRMET (68 aa). Positions 1201-1210 are enriched in polar residues; it reads KTPTSAASSR. Over residues 1221–1239 the composition is skewed to low complexity; sequence DGSFSSPSPHYYPTTTSTP.

In terms of assembly, interacts with sel-10. When activated, the glp-1/Notch intracellular domain (NICD) may become a component of a complex consisting of at least the NICD, lag-1 and lag-3. In terms of processing, upon binding its ligands, it is cleaved (S2 cleavage) in its extracellular domain, close to the transmembrane domain. S2 cleavage is probably mediated by the metalloproteases adm-4 and sup-17. It is then cleaved (S3 cleavage) downstream of its transmembrane domain, releasing it from the cell membrane; S3 cleavage requires a multiprotein gamma-secretase complex, which may include presenilin sel-12. As to expression, expressed in the distal mitotic region of the germ line. May be absent from the gonadal distal tip cell (DTC).

The protein resides in the cell membrane. The protein localises to the cell projection. It localises to the axon. It is found in the nucleus. Its function is as follows. Essential signaling protein which has a major role in germline and embryonic development; involved in cell fate decisions that require cell-cell interactions. Probable membrane-bound receptor for putative ligands lag-2 and apx-1. Upon ligand activation, and releasing from the cell membrane, the glp-1/Notch intracellular domain (NICD) probably forms a transcriptional activator complex with lag-1 and lag-3 and regulates expression of various genes; targets in the germline include lst-1 and sygl-1. Involved in the specification of the cell fates of the blastomeres, ABa and ABp. Proper signaling by glp-1 induces ABa descendants to produce anterior pharyngeal cells, and ABp descendants to adopt a different fate. Contributes to the establishment of the dorsal-ventral axis in early embryos. Required in postmitotic neurons in order to maintain the developmentally arrested larval state known as dauer, probably in response to lag-2. Regulates germ cell mitotic proliferation probably by regulating MAP kinase phosphatase lip-1 expression. Required for oocyte growth control. Plays a negative role in lifespan. This is Protein glp-1 from Caenorhabditis elegans.